A 54-amino-acid polypeptide reads, in one-letter code: MQEIVGYLVKNPEVLDEVMKGRASLLNIDKDQLKSIVDAFGGLQIYTNGNWVPS.

A propeptide spanning residues 1 to 46 (MQEIVGYLVKNPEVLDEVMKGRASLLNIDKDQLKSIVDAFGGLQIY) is cleaved from the precursor. Tryptophan 51 is lipidated: 3'-geranyl-2',N2-cyclotryptophan.

In terms of assembly, interacts directly with the sensor histidine kinase ComP and stimulates its activity. Trp-51 is modified by isoprenylation, probably by geranylation, which is essential for activity. Modified by the tryptophan prenyltransferase ComQ before export to the extracellular environment. The type of isoprenyl derivative differs among the different pherotypes and depends on ComX primary sequence.

It localises to the secreted. In terms of biological role, part of a major quorum-sensing system that regulates the development of genetic competence. Acts through the activation of the two-component regulatory system ComP/ComA composed of a sensor histidine kinase, ComP, and a response regulator, ComA. This Bacillus mojavensis protein is ComX pheromone.